We begin with the raw amino-acid sequence, 307 residues long: MKVSHHLYDQLSRITSEENVMVDELIRNHTYTKLGGKADVYITPESYSEVQDIIKLANKEDVPFTMLGNGSNLIVKDGGIRGIVMNLQKLASIWREEDKIIAQSGARIIDASRTALAESLAGLEFACGIPGSVGGALYMNAGAYGGEIKDVLESTIVVTKEGDIRTLTAVELDLDYRTSNIPDKGYIVLEATFALKKANSSDIKEVMDDLTYKRESKQPLEYPSCGSVFKRPPGYFAGKLIQDSELQGTQIGGAEVSKKHAGFIVNKNNASATEYINLIRHVQKTVSEKFGVQLEREVRIIGEDPVE.

An FAD-binding PCMH-type domain is found at 34-198; the sequence is LGGKADVYIT…LEATFALKKA (165 aa). The active site involves Arg177. Ser227 functions as the Proton donor in the catalytic mechanism. Residue Glu297 is part of the active site.

This sequence belongs to the MurB family. Requires FAD as cofactor.

The protein localises to the cytoplasm. The enzyme catalyses UDP-N-acetyl-alpha-D-muramate + NADP(+) = UDP-N-acetyl-3-O-(1-carboxyvinyl)-alpha-D-glucosamine + NADPH + H(+). The protein operates within cell wall biogenesis; peptidoglycan biosynthesis. In terms of biological role, cell wall formation. In Oceanobacillus iheyensis (strain DSM 14371 / CIP 107618 / JCM 11309 / KCTC 3954 / HTE831), this protein is UDP-N-acetylenolpyruvoylglucosamine reductase.